The sequence spans 389 residues: S-adenosylmethionine synthase (389 aa).

His-16 is a binding site for ATP. Asp-18 is a binding site for Mg(2+). Glu-44 provides a ligand contact to K(+). 2 residues coordinate L-methionine: Glu-57 and Gln-100. Positions 100-110 are flexible loop; it reads QSPDIAQGVDE. ATP contacts are provided by residues 167–169, 233–234, Asp-242, 248–249, Ala-265, and Lys-269; these read DAK, RF, and RK. Residue Asp-242 coordinates L-methionine. Lys-273 contributes to the L-methionine binding site.

This sequence belongs to the AdoMet synthase family. In terms of assembly, homotetramer; dimer of dimers. Mg(2+) is required as a cofactor. Requires K(+) as cofactor.

The protein localises to the cytoplasm. It carries out the reaction L-methionine + ATP + H2O = S-adenosyl-L-methionine + phosphate + diphosphate. It functions in the pathway amino-acid biosynthesis; S-adenosyl-L-methionine biosynthesis; S-adenosyl-L-methionine from L-methionine: step 1/1. Functionally, catalyzes the formation of S-adenosylmethionine (AdoMet) from methionine and ATP. The overall synthetic reaction is composed of two sequential steps, AdoMet formation and the subsequent tripolyphosphate hydrolysis which occurs prior to release of AdoMet from the enzyme. The chain is S-adenosylmethionine synthase from Acidithiobacillus ferrooxidans (strain ATCC 23270 / DSM 14882 / CIP 104768 / NCIMB 8455) (Ferrobacillus ferrooxidans (strain ATCC 23270)).